Consider the following 277-residue polypeptide: Carbonyl reductase [NADPH] 1 (277 aa).

Ser-2 is subject to N-acetylserine. Ser-2 carries the post-translational modification Phosphoserine. NADP(+) is bound by residues 10–34 (VTGANKGIGFAIVRDLCRKFLGDVV), 63–64 (DI), and Asn-90. Residues 95–97 (FKV) and Gln-106 contribute to the glutathione site. Ser-140 lines the substrate pocket. 193–194 (AY) contributes to the glutathione binding site. Tyr-194 serves as the catalytic Proton acceptor. Residues 194–198 (YGVTK) and 231–233 (VRT) contribute to the NADP(+) site. Lys-239 bears the N6-1-carboxyethyl lysine mark. The interval 258 to 277 (PPGAEGPHGQFVQDKKVEPW) is disordered.

It belongs to the short-chain dehydrogenases/reductases (SDR) family. In terms of assembly, monomer.

The protein localises to the cytoplasm. The enzyme catalyses a secondary alcohol + NADP(+) = a ketone + NADPH + H(+). It catalyses the reaction prostaglandin F2alpha + NADP(+) = prostaglandin E2 + NADPH + H(+). The catalysed reaction is prostaglandin E1 + NADP(+) = 15-oxoprostaglandin E1 + NADPH + H(+). It carries out the reaction menadione + NADPH + H(+) = menadiol + NADP(+). The enzyme catalyses prostaglandin D2 + NADP(+) = 15-oxoprostaglandin D2 + NADPH + H(+). It catalyses the reaction prostaglandin E2 + NADP(+) = 15-oxoprostaglandin E2 + NADPH + H(+). The catalysed reaction is prostaglandin F2alpha + NADP(+) = 15-oxoprostaglandin F2alpha + NADPH + H(+). It carries out the reaction daunorubicin + NADPH + H(+) = 13-dihydrodaunorubicin + NADP(+). The enzyme catalyses S-nitrosoglutathione + NADPH + H(+) = S-(hydroxysulfenamide)glutathione + NADP(+). It catalyses the reaction a primary alcohol + NADP(+) = an aldehyde + NADPH + H(+). The catalysed reaction is cortisol + NADPH + H(+) = 20beta-dihydrocortisol + NADP(+). It carries out the reaction corticosterone + NADPH + H(+) = 20beta-dihydrocorticosterone + NADP(+). Its function is as follows. NADPH-dependent reductase with broad substrate specificity. Catalyzes the reduction of a wide variety of carbonyl compounds including quinones, prostaglandins, menadione, plus various xenobiotics. Catalyzes the reduction of the antitumor anthracyclines doxorubicin and daunorubicin to the cardiotoxic compounds doxorubicinol and daunorubicinol. Can convert prostaglandin E to prostaglandin F2-alpha. Can bind glutathione, which explains its higher affinity for glutathione-conjugated substrates. Catalyzes the reduction of S-nitrosoglutathione. In addition, participates in the glucocorticoid metabolism by catalyzing the NADPH-dependent cortisol/corticosterone into 20beta-dihydrocortisol (20b-DHF) or 20beta-corticosterone (20b-DHB), which are weak agonists of NR3C1 and NR3C2 in adipose tissue. This chain is Carbonyl reductase [NADPH] 1, found in Rattus norvegicus (Rat).